We begin with the raw amino-acid sequence, 570 residues long: Sulfite reductase [NADPH] hemoprotein beta-component (570 aa).

Positions 434, 440, 479, and 483 each coordinate [4Fe-4S] cluster. Cysteine 483 is a binding site for siroheme.

The protein belongs to the nitrite and sulfite reductase 4Fe-4S domain family. As to quaternary structure, alpha(8)-beta(8). The alpha component is a flavoprotein, the beta component is a hemoprotein. Requires siroheme as cofactor. It depends on [4Fe-4S] cluster as a cofactor.

It catalyses the reaction hydrogen sulfide + 3 NADP(+) + 3 H2O = sulfite + 3 NADPH + 4 H(+). It functions in the pathway sulfur metabolism; hydrogen sulfide biosynthesis; hydrogen sulfide from sulfite (NADPH route): step 1/1. Component of the sulfite reductase complex that catalyzes the 6-electron reduction of sulfite to sulfide. This is one of several activities required for the biosynthesis of L-cysteine from sulfate. This Shigella flexneri protein is Sulfite reductase [NADPH] hemoprotein beta-component.